Here is a 234-residue protein sequence, read N- to C-terminus: uncharacterized protein (234 aa).

The 109-residue stretch at Leu103 to Leu211 folds into the tRNA-binding domain.

This is an uncharacterized protein from Mycoplasma pneumoniae (strain ATCC 29342 / M129 / Subtype 1) (Mycoplasmoides pneumoniae).